The chain runs to 281 residues: N-acetyltransferase ECO1 (281 aa).

The CCHH-type zinc finger occupies 33 to 57; that stretch reads VKCDKCEMSYSSTSIEDRAIHEKYH. The tract at residues 86-105 is disordered; it reads LSRSTGTITPLNSSPLKKSS. The segment covering 95–105 has biased composition (low complexity); that stretch reads PLNSSPLKKSS. The residue at position 223 (K223) is an N6-acetyllysine; by autocatalysis.

It belongs to the acetyltransferase family. ECO subfamily. As to quaternary structure, binds specifically to CHL12, RFC1, RFC2, RFC3, RFC4, RFC5 and RAD24 when members of an RFC complex. Interacts with CHL1 and MPS3. Post-translationally, autoacetylates in vitro.

The protein localises to the nucleus. In terms of biological role, required for establishment of sister chromatid cohesion during S phase but not for its further maintenance during G2 or M phases or for loading the cohesin complex onto DNA. Interacts with the three known alternate replication factor C (RFC) complexes, suggesting that these complexes have essential but redundant activity in cohesion establishment. Acts by acetylating the cohesin complex component SMC3. In vitro, possesses acetyltransferase activity where it can acetylate itself and components of the cohesin complex (MCD1, IRR1 and PDS5), but is unable to acetylate histones. The protein is N-acetyltransferase ECO1 (ECO1) of Saccharomyces cerevisiae (strain ATCC 204508 / S288c) (Baker's yeast).